The sequence spans 48 residues: uncharacterized protein (48 aa).

This sequence belongs to the ELIP/psbS family.

The protein localises to the plastid. The protein resides in the chloroplast. In terms of biological role, possible role in chlorophyll and/or carotenoid binding. This is an uncharacterized protein from Pyropia yezoensis (Susabi-nori).